The following is a 326-amino-acid chain: tRNA uridine(34) hydroxylase (326 aa).

The region spanning 123–217 is the Rhodanese domain; sequence SDPDVILVDT…YLEEVKQEES (95 aa). The active-site Cysteine persulfide intermediate is Cys177.

It belongs to the TrhO family.

It catalyses the reaction uridine(34) in tRNA + AH2 + O2 = 5-hydroxyuridine(34) in tRNA + A + H2O. In terms of biological role, catalyzes oxygen-dependent 5-hydroxyuridine (ho5U) modification at position 34 in tRNAs. This Shewanella denitrificans (strain OS217 / ATCC BAA-1090 / DSM 15013) protein is tRNA uridine(34) hydroxylase.